The following is a 447-amino-acid chain: Rab GDP dissociation inhibitor alpha (447 aa).

Serine 427 carries the post-translational modification Phosphoserine.

It belongs to the Rab GDI family. As to quaternary structure, interacts with RHOH. Interacts with the non-phosphorylated forms of RAB1A, RAB3A, RAB5A, RAB5B, RAB5C, RAB8A, RAB8B, RAB10, RAB12, RAB35, and RAB43. High expression in brain, lower in other tissues.

Its subcellular location is the cytoplasm. The protein localises to the golgi apparatus. It localises to the trans-Golgi network. In terms of biological role, regulates the GDP/GTP exchange reaction of most Rab proteins by inhibiting the dissociation of GDP from them, and the subsequent binding of GTP to them. Promotes the dissociation of GDP-bound Rab proteins from the membrane and inhibits their activation. Promotes the dissociation of RAB1A, RAB3A, RAB5A and RAB10 from membranes. This chain is Rab GDP dissociation inhibitor alpha (Gdi1), found in Rattus norvegicus (Rat).